Here is a 490-residue protein sequence, read N- to C-terminus: Katanin p60 ATPase-containing subunit A-like 1 (490 aa).

Methionine 1 carries the post-translational modification N-acetylmethionine. A disordered region spans residues 95–178 (DPAVWPPPVP…MQDGASDGDI (84 aa)). Residues 116–127 (PNREVRPLRKDV) show a composition bias toward basic and acidic residues. Positions 128–139 (AGVGARGPVGRA) are enriched in low complexity. Residues 143-169 (SKSEKPSTNKDKDYRARGRDDKGRKNM) show a composition bias toward basic and acidic residues. The residue at position 174 (serine 174) is a Phosphoserine. An ATP-binding site is contributed by 248–255 (GPPGTGKT).

The protein belongs to the AAA ATPase family. Katanin p60 subunit A1 subfamily. A-like 1 sub-subfamily. As to quaternary structure, interacts with KATNB1 and KATNBL1.

The protein resides in the cytoplasm. It localises to the cytoskeleton. The protein localises to the spindle pole. It is found in the spindle. The enzyme catalyses n ATP + n H2O + a microtubule = n ADP + n phosphate + (n+1) alpha/beta tubulin heterodimers.. Regulates microtubule dynamics in Sertoli cells, a process that is essential for spermiogenesis and male fertility. Severs microtubules in an ATP-dependent manner, promoting rapid reorganization of cellular microtubule arrays. Has microtubule-severing activity in vitro. In Sorex araneus (Eurasian common shrew), this protein is Katanin p60 ATPase-containing subunit A-like 1.